The chain runs to 884 residues: Alanine--tRNA ligase (884 aa).

Zn(2+) is bound by residues histidine 572, histidine 576, cysteine 673, and histidine 677.

Belongs to the class-II aminoacyl-tRNA synthetase family. It depends on Zn(2+) as a cofactor.

It localises to the cytoplasm. It carries out the reaction tRNA(Ala) + L-alanine + ATP = L-alanyl-tRNA(Ala) + AMP + diphosphate. In terms of biological role, catalyzes the attachment of alanine to tRNA(Ala) in a two-step reaction: alanine is first activated by ATP to form Ala-AMP and then transferred to the acceptor end of tRNA(Ala). Also edits incorrectly charged Ser-tRNA(Ala) and Gly-tRNA(Ala) via its editing domain. This chain is Alanine--tRNA ligase, found in Xylella fastidiosa (strain M12).